Consider the following 430-residue polypeptide: Small ribosomal subunit protein uS5m (430 aa).

The tract at residues 108–128 is disordered; it reads AGARKGRGKRTKRKRRKDLNR. Over residues 111–125 the composition is skewed to basic residues; that stretch reads RKGRGKRTKRKRRKD. One can recognise an S5 DRBM domain in the interval 218 to 282; the sequence is FDTRILEVRN…NRAVHYLHYI (65 aa).

This sequence belongs to the universal ribosomal protein uS5 family. Component of the mitochondrial ribosome small subunit (28S) which comprises a 12S rRNA and about 30 distinct proteins.

The protein resides in the mitochondrion. The sequence is that of Small ribosomal subunit protein uS5m (MRPS5) from Bos taurus (Bovine).